A 211-amino-acid chain; its full sequence is Probable nicotinate-nucleotide adenylyltransferase (211 aa).

It belongs to the NadD family.

The catalysed reaction is nicotinate beta-D-ribonucleotide + ATP + H(+) = deamido-NAD(+) + diphosphate. It functions in the pathway cofactor biosynthesis; NAD(+) biosynthesis; deamido-NAD(+) from nicotinate D-ribonucleotide: step 1/1. Its function is as follows. Catalyzes the reversible adenylation of nicotinate mononucleotide (NaMN) to nicotinic acid adenine dinucleotide (NaAD). In Wigglesworthia glossinidia brevipalpis, this protein is Probable nicotinate-nucleotide adenylyltransferase.